We begin with the raw amino-acid sequence, 475 residues long: Solute carrier family 46 member 2 (475 aa).

Residues 1-23 lie on the Cytoplasmic side of the membrane; sequence MSPEVTCPRRGHLPRFHPRTWVE. A helical transmembrane segment spans residues 24–44; sequence PVVASSQVAASLYDAGLLLVV. Over 45-78 the chain is Extracellular; it reads KASYGTGGSSNHSASPSPRGALEDQQQRAISNFY. N-linked (GlcNAc...) asparagine glycosylation is present at asparagine 55. The helical transmembrane segment at 79–99 threads the bilayer; that stretch reads IIYNLVVGLSPLLSAYGLGWL. Residues 100–108 lie on the Cytoplasmic side of the membrane; sequence SDRYHRKIS. Residues 109-129 traverse the membrane as a helical segment; that stretch reads ICMSLLGFLLSRLGLLLKVLL. Residues 130 to 138 lie on the Extracellular side of the membrane; sequence DWPVEVLYG. A helical transmembrane segment spans residues 139–159; the sequence is AAALNGLFGGFSAFWSGVMAL. The Cytoplasmic segment spans residues 160–172; that stretch reads GSLGSSEGRRSVR. The chain crosses the membrane as a helical span at residues 173–193; sequence LILIDLMLGLAGFCGSMASGH. Residues 194 to 205 are Extracellular-facing; sequence LFKQMAGHSGQG. A helical membrane pass occupies residues 206–226; sequence LILTACSVSCASFALLYSLLV. Residues 227-282 lie on the Cytoplasmic side of the membrane; the sequence is LKVPESVAKPSQELPAVDTVSGTVGTYRTLDPDQLDQQYAVGHPPSPGKAKPHKTT. The chain crosses the membrane as a helical span at residues 283-303; sequence IALLFVGAIIYDLAVVGTVDV. Over 304 to 320 the chain is Extracellular; that stretch reads IPLFVLREPLGWNQVQV. Residues 321-341 form a helical membrane-spanning segment; the sequence is GYGMAAGYTIFITSFLGVLVF. The Cytoplasmic portion of the chain corresponds to 342–347; it reads SRCFRD. Residues 348–368 traverse the membrane as a helical segment; it reads TTMIMIGMVSFGSGALLLAFV. Residues 369-370 lie on the Extracellular side of the membrane; that stretch reads KE. Residues 371 to 391 traverse the membrane as a helical segment; sequence TYMFYIARAVMLFALIPVTTI. Residues 392-406 are Cytoplasmic-facing; the sequence is RSAMSKLIKGSSYGK. The chain crosses the membrane as a helical span at residues 407-427; it reads VFVILQLSLALTGVVTSTLYN. The Extracellular segment spans residues 428–435; the sequence is KIYQLTMD. Residues 436–456 form a helical membrane-spanning segment; sequence MFVGSCFALSSFLSFLAIIPI. The Cytoplasmic portion of the chain corresponds to 457–475; the sequence is SIVAYKQVPLSPYGDIIEK.

This sequence belongs to the major facilitator superfamily. SLC46A family. Glycosylated. As to expression, strongly expressed in the adult thymus. Expressed in spleen, lymph nodes, thymus, PBL, bone marrow and fetal liver. Expressed in monocytes and pre-dendridic cells.

The protein localises to the endosome membrane. It is found in the cell membrane. The enzyme catalyses N-acetyl-beta-D-glucosaminyl-(1-&gt;4)-1,6-anhydro-N-acetyl-beta-D-muramoyl-L-alanyl-gamma-D-glutamyl-meso-2,6-diaminopimeloyl-D-alanine(out) + n H(+)(out) = N-acetyl-beta-D-glucosaminyl-(1-&gt;4)-1,6-anhydro-N-acetyl-beta-D-muramoyl-L-alanyl-gamma-D-glutamyl-meso-2,6-diaminopimeloyl-D-alanine(in) + n H(+)(in). It carries out the reaction L-alanyl-gamma-D-glutamyl-meso-2,6-diaminopimelate(out) + n H(+)(out) = L-alanyl-gamma-D-glutamyl-meso-2,6-diaminopimelate(in) + n H(+)(in). It catalyses the reaction N-acetyl-D-muramoyl-L-alanyl-D-isoglutamine(out) + n H(+)(out) = N-acetyl-D-muramoyl-L-alanyl-D-isoglutamine(in) + n H(+)(in). The catalysed reaction is 2',3'-cGAMP(out) + n H(+)(out) = 2',3'-cGAMP(in) + n H(+)(in). The enzyme catalyses 3',3'-cGAMP(out) + n H(+)(out) = 3',3'-cGAMP(in) + n H(+)(in). In terms of biological role, proton-coupled transporter that delivers pathogen-associated or danger-associated molecular patterns to cytosolic pattern recognition receptors as part of the innate immune response to microbes or tissue injury. Has selectivity toward muropeptides that contain the amino acid diaminopimelic acid (DAP-type peptidoglycan muropeptides) including Tri-DAP and tracheal toxin (TCT), common in Gram-negative bacteria and Gram-positive bacilli. In the context of immune recognition of skin microbiota, shuttles bacterial muropeptides across the endolysosomal membranes into the cytosol for recognition by NOD1, triggering MYD88-dependent secretion of IL1A and neutrophil recruitment in a pyroptosis-type inflammatory process. To a lesser extent and redundantly, transports muramyl dipeptides derived from most bacterial proteoglycans, eliciting NOD2 receptor activation and downstream inflammatory responses. Postulated to function as a dominant importer of cyclic GMP-AMP dinucleotides (cGAMPs) in monocyte and macrophage cell lineages. Selectively imports cGAMPs derived from pathogenic bacteria such as 3'3'-cGAMP thus providing for differential immune recognition of pathogenic versus commensal bacteria. During tumorigenesis may transport extracellular tumor-derived 2'3'-cGAMP across the plasma membrane of M1-polarized macrophages to activate the anti-tumoral stimulator of interferon genes (STING) pathway. The transport mechanism, its electrogenicity and stoichiometry remain to be elucidated. This Homo sapiens (Human) protein is Solute carrier family 46 member 2.